The chain runs to 737 residues: Dynein axonemal intermediate chain 7 homolog (737 aa).

Polar residues predominate over residues 1-15; it reads MPPKSPNRSGKSTPT. Disordered stretches follow at residues 1 to 61, 274 to 362, and 410 to 452; these read MPPK…ERRA, KKVK…DDEE, and STVK…QQPP. 3 stretches are compositionally biased toward basic and acidic residues: residues 18 to 61, 276 to 316, and 333 to 349; these read RPGE…ERRA, VKDE…EGRQ, and EETKKDENEGEKEDAVK. Polar residues-rich tracts occupy residues 417-429 and 441-451; these read DNPNTGRSSSRVA and PSKTPLEQQQP.

The protein belongs to the DNAI7 family.

The chain is Dynein axonemal intermediate chain 7 homolog (AXP83.9) from Ciona intestinalis (Transparent sea squirt).